Here is a 597-residue protein sequence, read N- to C-terminus: Arginine--tRNA ligase (597 aa).

Residues 23-32 show a composition bias toward low complexity; sequence QAAAARQASQ. Residues 23 to 43 are disordered; that stretch reads QAAAARQASQPLDPQLAPASK. A 'HIGH' region motif is present at residues 137-147; the sequence is PNIAKEMHVGH.

The protein belongs to the class-I aminoacyl-tRNA synthetase family. Monomer.

The protein localises to the cytoplasm. The enzyme catalyses tRNA(Arg) + L-arginine + ATP = L-arginyl-tRNA(Arg) + AMP + diphosphate. In Synechococcus sp. (strain WH7803), this protein is Arginine--tRNA ligase.